Consider the following 241-residue polypeptide: Uridylate kinase (241 aa).

Position 14-17 (14-17) interacts with ATP; sequence KLSG. G56 is a binding site for UMP. ATP contacts are provided by G57 and R61. Residues D77 and 138–145 contribute to the UMP site; that span reads TGNPFFTT. The ATP site is built by T165, Y171, and D174.

The protein belongs to the UMP kinase family. As to quaternary structure, homohexamer.

It localises to the cytoplasm. It catalyses the reaction UMP + ATP = UDP + ADP. It functions in the pathway pyrimidine metabolism; CTP biosynthesis via de novo pathway; UDP from UMP (UMPK route): step 1/1. Its activity is regulated as follows. Inhibited by UTP. Functionally, catalyzes the reversible phosphorylation of UMP to UDP. This is Uridylate kinase from Psychrobacter arcticus (strain DSM 17307 / VKM B-2377 / 273-4).